A 228-amino-acid chain; its full sequence is Lipoprotein-releasing system ATP-binding protein LolD (228 aa).

One can recognise an ABC transporter domain in the interval 6-228; it reads IKCLNVVKGY…EAGVLNKQGQ (223 aa). ATP is bound at residue 42 to 49; it reads GASGSGKS.

This sequence belongs to the ABC transporter superfamily. Lipoprotein translocase (TC 3.A.1.125) family. The complex is composed of two ATP-binding proteins (LolD) and two transmembrane proteins (LolC and LolE).

The protein localises to the cell inner membrane. In terms of biological role, part of the ABC transporter complex LolCDE involved in the translocation of mature outer membrane-directed lipoproteins, from the inner membrane to the periplasmic chaperone, LolA. Responsible for the formation of the LolA-lipoprotein complex in an ATP-dependent manner. In Saccharophagus degradans (strain 2-40 / ATCC 43961 / DSM 17024), this protein is Lipoprotein-releasing system ATP-binding protein LolD.